A 567-amino-acid chain; its full sequence is Glutamate--tRNA ligase (567 aa).

The 'HIGH' region motif lies at 106–116 (PNPDGPLHLGN).

It belongs to the class-I aminoacyl-tRNA synthetase family. Glutamate--tRNA ligase type 2 subfamily.

It is found in the cytoplasm. It carries out the reaction tRNA(Glu) + L-glutamate + ATP = L-glutamyl-tRNA(Glu) + AMP + diphosphate. In terms of biological role, catalyzes the attachment of glutamate to tRNA(Glu) in a two-step reaction: glutamate is first activated by ATP to form Glu-AMP and then transferred to the acceptor end of tRNA(Glu). The chain is Glutamate--tRNA ligase from Sulfolobus acidocaldarius (strain ATCC 33909 / DSM 639 / JCM 8929 / NBRC 15157 / NCIMB 11770).